The sequence spans 645 residues: 1-deoxy-D-xylulose-5-phosphate synthase 1 (645 aa).

Positions 1-20 (MTDTKTPTLDRVAGPADLRS) are disordered. Residues His78 and 119–121 (AHS) each bind thiamine diphosphate. Asp150 is a binding site for Mg(2+). Thiamine diphosphate-binding positions include 151-152 (GS), Asn179, Tyr291, and Glu373. Position 179 (Asn179) interacts with Mg(2+).

It belongs to the transketolase family. DXPS subfamily. Homodimer. It depends on Mg(2+) as a cofactor. The cofactor is thiamine diphosphate.

The enzyme catalyses D-glyceraldehyde 3-phosphate + pyruvate + H(+) = 1-deoxy-D-xylulose 5-phosphate + CO2. The protein operates within metabolic intermediate biosynthesis; 1-deoxy-D-xylulose 5-phosphate biosynthesis; 1-deoxy-D-xylulose 5-phosphate from D-glyceraldehyde 3-phosphate and pyruvate: step 1/1. Catalyzes the acyloin condensation reaction between C atoms 2 and 3 of pyruvate and glyceraldehyde 3-phosphate to yield 1-deoxy-D-xylulose-5-phosphate (DXP). This Roseobacter denitrificans (strain ATCC 33942 / OCh 114) (Erythrobacter sp. (strain OCh 114)) protein is 1-deoxy-D-xylulose-5-phosphate synthase 1.